Reading from the N-terminus, the 182-residue chain is Protein Syd (182 aa).

Belongs to the Syd family.

It localises to the cell inner membrane. Functionally, interacts with the SecY protein in vivo. May bind preferentially to an uncomplexed state of SecY, thus functioning either as a chelating agent for excess SecY in the cell or as a regulatory factor that negatively controls the translocase function. The sequence is that of Protein Syd from Aeromonas salmonicida (strain A449).